The chain runs to 557 residues: Probable protein kinase UbiB (557 aa).

A Protein kinase domain is found at 121–509 (SFDTVPLASA…RKLQTRVVTA (389 aa)). ATP is bound by residues 127 to 135 (LASASIAQV) and Lys154. The active-site Proton acceptor is the Asp289. 2 helical membrane-spanning segments follow: residues 506–526 (VVTA…YGLH) and 535–555 (VPVW…VAWL).

The protein belongs to the ABC1 family. UbiB subfamily.

The protein localises to the cell inner membrane. It participates in cofactor biosynthesis; ubiquinone biosynthesis [regulation]. In terms of biological role, is probably a protein kinase regulator of UbiI activity which is involved in aerobic coenzyme Q (ubiquinone) biosynthesis. This is Probable protein kinase UbiB from Xanthomonas oryzae pv. oryzae (strain MAFF 311018).